Consider the following 214-residue polypeptide: Nigrelysin (214 aa).

The signal sequence occupies residues 1–21; that stretch reads MKNRLVIIVFMVVTMLCASLA. Residues 22-35 constitute a propeptide that is removed on maturation; sequence LPLEEKEDEKDEKR. The tract at residues 38–47 is plays an important role in the hemolytic activity; sequence EVAGAVMEGA. The interval 46-65 is N-terminal region; it reads GANLGMSVLQTILQAIGDVS. 7 residues coordinate phosphocholine: serine 89, valine 122, serine 140, proline 142, tyrosine 168, tyrosine 172, and tyrosine 173. The segment at 140–155 is trp-rich region, which is important for the binding to lipid membrane; the sequence is SVPYDYNWYSNWWNVK. A Cell attachment site, crucial for protein stability motif is present at residues 179 to 181; the sequence is KGD.

Belongs to the actinoporin family. Sea anemone subfamily. In terms of assembly, octamer or nonamer in membranes. Monomer in the soluble state.

It is found in the secreted. Its subcellular location is the nematocyst. The protein localises to the target cell membrane. Pore-forming protein that forms cation-selective hydrophilic pores in cell membranes and causes cytolysis. Pore formation is a multi-step process that involves specific recognition of membrane sphingomyelin (but neither cholesterol nor phosphatidylcholine) using aromatic rich region and adjacent phosphocholine (POC) binding site, firm binding to the membrane (mainly driven by hydrophobic interactions) accompanied by the transfer of the N-terminal region to the lipid-water interface and finally pore formation after oligomerization of monomers. This protein shows potent hemolytic activity (EC(50)=0.09 nM), as well as potent cytotoxic activity on nucleated cells (L1210 cells). The cytotoxic process starts with cellular swelling that is time and dose dependent and occurs up to a critical volume, probably due to influx of water via pores opened by this actinoporin. The second phase consists of the final loss of membrane integrity that leads to cytolysis. This chain is Nigrelysin, found in Anthopleura nigrescens (Sea anemone).